Here is a 114-residue protein sequence, read N- to C-terminus: Hydrogenase maturation factor HypA (114 aa).

Position 2 (His2) interacts with Ni(2+). Zn(2+)-binding residues include Cys70, Cys73, Cys86, and Cys89.

Belongs to the HypA/HybF family.

Functionally, involved in the maturation of [NiFe] hydrogenases. Required for nickel insertion into the metal center of the hydrogenase. The polypeptide is Hydrogenase maturation factor HypA (Crocosphaera subtropica (strain ATCC 51142 / BH68) (Cyanothece sp. (strain ATCC 51142))).